The chain runs to 341 residues: Phenylalanine--tRNA ligase alpha subunit (341 aa).

Glutamate 254 serves as a coordination point for Mg(2+).

Belongs to the class-II aminoacyl-tRNA synthetase family. Phe-tRNA synthetase alpha subunit type 1 subfamily. Tetramer of two alpha and two beta subunits. Mg(2+) is required as a cofactor.

It localises to the cytoplasm. The enzyme catalyses tRNA(Phe) + L-phenylalanine + ATP = L-phenylalanyl-tRNA(Phe) + AMP + diphosphate + H(+). The chain is Phenylalanine--tRNA ligase alpha subunit from Chlorobium phaeobacteroides (strain DSM 266 / SMG 266 / 2430).